Here is a 377-residue protein sequence, read N- to C-terminus: Probable glucokinase 2 (377 aa).

Position 27–32 (27–32) interacts with ATP; sequence CDVGGS.

Belongs to the bacterial glucokinase family.

It catalyses the reaction D-glucose + ATP = D-glucose 6-phosphate + ADP + H(+). This is Probable glucokinase 2 (GK2) from Trichomonas vaginalis.